Consider the following 160-residue polypeptide: Cytosolic iron-sulfur assembly component 2A (160 aa).

Zn(2+)-binding residues include histidine 89, histidine 123, glutamate 150, and glutamate 153.

This sequence belongs to the MIP18 family. As to quaternary structure, monomer and homodimer. Component of the CIA complex. Interacts with CIAO1. Interacts with IREB2. Interacts with APAF1. As to expression, substantially enriched in macrophages.

It localises to the cytoplasm. Its function is as follows. Component of the cytosolic iron-sulfur protein assembly (CIA) complex, a multiprotein complex that mediates the incorporation of iron-sulfur cluster into extramitochondrial Fe/S proteins. As a CIA complex component and in collaboration with CIAO1 specifically matures ACO1 and stabilizes IREB2, connecting cytosolic iron-sulfur protein maturation with cellular iron regulation. May play a role in chromosome segregation through establishment of sister chromatid cohesion. May induce apoptosis in collaboration with APAF1. This is Cytosolic iron-sulfur assembly component 2A from Homo sapiens (Human).